Here is a 346-residue protein sequence, read N- to C-terminus: Phenylalanine--tRNA ligase alpha subunit (346 aa).

Glutamate 264 provides a ligand contact to Mg(2+).

Belongs to the class-II aminoacyl-tRNA synthetase family. Phe-tRNA synthetase alpha subunit type 1 subfamily. Tetramer of two alpha and two beta subunits. Mg(2+) is required as a cofactor.

Its subcellular location is the cytoplasm. The enzyme catalyses tRNA(Phe) + L-phenylalanine + ATP = L-phenylalanyl-tRNA(Phe) + AMP + diphosphate + H(+). This is Phenylalanine--tRNA ligase alpha subunit from Leifsonia xyli subsp. xyli (strain CTCB07).